A 258-amino-acid chain; its full sequence is Imidazole glycerol phosphate synthase subunit HisF (258 aa).

Residues aspartate 11 and aspartate 130 contribute to the active site.

The protein belongs to the HisA/HisF family. As to quaternary structure, heterodimer of HisH and HisF.

The protein localises to the cytoplasm. It catalyses the reaction 5-[(5-phospho-1-deoxy-D-ribulos-1-ylimino)methylamino]-1-(5-phospho-beta-D-ribosyl)imidazole-4-carboxamide + L-glutamine = D-erythro-1-(imidazol-4-yl)glycerol 3-phosphate + 5-amino-1-(5-phospho-beta-D-ribosyl)imidazole-4-carboxamide + L-glutamate + H(+). It functions in the pathway amino-acid biosynthesis; L-histidine biosynthesis; L-histidine from 5-phospho-alpha-D-ribose 1-diphosphate: step 5/9. Its function is as follows. IGPS catalyzes the conversion of PRFAR and glutamine to IGP, AICAR and glutamate. The HisF subunit catalyzes the cyclization activity that produces IGP and AICAR from PRFAR using the ammonia provided by the HisH subunit. This is Imidazole glycerol phosphate synthase subunit HisF from Blochmanniella pennsylvanica (strain BPEN).